The chain runs to 406 residues: Peptidase T (406 aa).

H82 serves as a coordination point for Zn(2+). Residue D84 is part of the active site. Zn(2+) is bound at residue D142. The Proton acceptor role is filled by E176. Residues E177, D199, and H381 each coordinate Zn(2+).

It belongs to the peptidase M20B family. The cofactor is Zn(2+).

It is found in the cytoplasm. It catalyses the reaction Release of the N-terminal residue from a tripeptide.. Cleaves the N-terminal amino acid of tripeptides. The polypeptide is Peptidase T (Streptococcus agalactiae serotype V (strain ATCC BAA-611 / 2603 V/R)).